A 428-amino-acid chain; its full sequence is C4-dicarboxylate transport protein (428 aa).

Transmembrane regions (helical) follow at residues 8 to 28, 44 to 64, 76 to 96, 142 to 162, 184 to 204, 222 to 242, 289 to 309, 326 to 346, and 352 to 372; these read SLYV…HFYP, LIKM…IAGM, VALL…LIIV, IGAF…LFGF, VIFG…FGAM, LIIC…GSIA, VVGL…SIYL, IFHQ…AAGV, and IVLA…LALI.

This sequence belongs to the dicarboxylate/amino acid:cation symporter (DAACS) (TC 2.A.23) family.

The protein resides in the cell inner membrane. Functionally, responsible for the transport of dicarboxylates such as succinate, fumarate, and malate from the periplasm across the membrane. In Klebsiella pneumoniae subsp. pneumoniae (strain ATCC 700721 / MGH 78578), this protein is C4-dicarboxylate transport protein.